The chain runs to 254 residues: Glutamate racemase (254 aa).

Residues Asp10–Ser11 and Tyr42–Gly43 contribute to the substrate site. Cys73 functions as the Proton donor/acceptor in the catalytic mechanism. Asn74 to Thr75 serves as a coordination point for substrate. Cys183 functions as the Proton donor/acceptor in the catalytic mechanism. Residue Thr184–His185 participates in substrate binding.

Belongs to the aspartate/glutamate racemases family.

The catalysed reaction is L-glutamate = D-glutamate. It functions in the pathway cell wall biogenesis; peptidoglycan biosynthesis. Its function is as follows. Provides the (R)-glutamate required for cell wall biosynthesis. This Herpetosiphon aurantiacus (strain ATCC 23779 / DSM 785 / 114-95) protein is Glutamate racemase.